Consider the following 206-residue polypeptide: Small ribosomal subunit protein uS4 (206 aa).

In terms of domain architecture, S4 RNA-binding spans Cys96–Ala156.

It belongs to the universal ribosomal protein uS4 family. As to quaternary structure, part of the 30S ribosomal subunit. Contacts protein S5. The interaction surface between S4 and S5 is involved in control of translational fidelity.

In terms of biological role, one of the primary rRNA binding proteins, it binds directly to 16S rRNA where it nucleates assembly of the body of the 30S subunit. With S5 and S12 plays an important role in translational accuracy. The polypeptide is Small ribosomal subunit protein uS4 (Pseudomonas aeruginosa (strain LESB58)).